The chain runs to 142 residues: Small ribosomal subunit protein uS12 (142 aa).

Positions 1 to 44 are disordered; sequence MANGKYAARKLKQDRQKHRWSDSDYARRARGLGKKSDPLEGAPQ. The span at 11 to 27 shows a compositional bias: basic and acidic residues; sequence LKQDRQKHRWSDSDYAR.

It belongs to the universal ribosomal protein uS12 family. In terms of assembly, part of the 30S ribosomal subunit.

Its function is as follows. With S4 and S5 plays an important role in translational accuracy. Located at the interface of the 30S and 50S subunits. The sequence is that of Small ribosomal subunit protein uS12 from Natronomonas pharaonis (strain ATCC 35678 / DSM 2160 / CIP 103997 / JCM 8858 / NBRC 14720 / NCIMB 2260 / Gabara) (Halobacterium pharaonis).